A 462-amino-acid chain; its full sequence is MVEQTTSEPAAGSMPKISFGVKKREENKVQAPAKAVVIEVDLDSDEEREKNEMERAAKRRKVMHFEDGTVQGDIDKPKEAAVIPMVVEHDWRTQKLIEKEKAGTLTEEERAKLALVLPNGIDGENEEESGKGEKIVVEDGRGDTEDADYSAIPIESFGLAILRGCNWKDGDGIGKNPQKVALKLPNRRPPGLGLGATPKNPVGKNKNTGESSKAEEEKLEEIKVGSFIKVVDGRNKGVYGKVEGRDDDSNSLFIRTAIGGKTMKVSQIVAVAVSAKEYERDSKCLNKSEYDKEKDRLETERKKLESQPPSTSTSQSSKDYKSKSSSSKHDKNSSEYERNDKMWARTDLLVRFIDEDFKRGSLYEQKVRIVDVAGDNDVTIEDDRGNTHYNIRQSWLETVIPREIGEKLMIVAGKRSGQLAVMLDKDKRKEKVTARLVATNDVVTAYFEDVCSVKIRHEEDYE.

Disordered stretches follow at residues 1 to 26 (MVEQTTSEPAAGSMPKISFGVKKREE) and 182 to 218 (LKLPNRRPPGLGLGATPKNPVGKNKNTGESSKAEEEK). The G-patch domain occupies 154–202 (IESFGLAILRGCNWKDGDGIGKNPQKVALKLPNRRPPGLGLGATPKNPV). The KOW 1 domain maps to 221-248 (EIKVGSFIKVVDGRNKGVYGKVEGRDDD). Residues 289-305 (EYDKEKDRLETERKKLE) are compositionally biased toward basic and acidic residues. Residues 289 to 337 (EYDKEKDRLETERKKLESQPPSTSTSQSSKDYKSKSSSSKHDKNSSEYE) are disordered. Low complexity predominate over residues 306–317 (SQPPSTSTSQSS). The span at 318–337 (KDYKSKSSSSKHDKNSSEYE) shows a compositional bias: basic and acidic residues. Residues 401 to 428 (PREIGEKLMIVAGKRSGQLAVMLDKDKR) form the KOW 2 domain.

The protein belongs to the MOS2 family.

It localises to the nucleus. The chain is G-patch domain and KOW motifs-containing protein homolog 1 from Caenorhabditis elegans.